Consider the following 529-residue polypeptide: Hyaluronidase PH-20 (529 aa).

A signal peptide spans 1-35 (MGAFTFKHSFFGSFVECSGVLQTVFIFLLIPCCLA). 2 disulfides stabilise this stretch: cysteine 59-cysteine 351 and cysteine 223-cysteine 237. N-linked (GlcNAc...) asparagine glycosylation is present at asparagine 81. Residue glutamate 147 is the Proton donor of the active site. N-linked (GlcNAc...) asparagine glycans are attached at residues asparagine 165 and asparagine 179. Asparagine 253 and asparagine 368 each carry an N-linked (GlcNAc...) asparagine glycan. 3 cysteine pairs are disulfide-bonded: cysteine 376-cysteine 387, cysteine 381-cysteine 435, and cysteine 437-cysteine 464. Asparagine 401 is a glycosylation site (N-linked (GlcNAc...) asparagine). Residues 478 to 502 (DEPPITDDTSQNQDSISDITSSAPP) form a disordered region. The segment covering 487 to 502 (SQNQDSISDITSSAPP) has biased composition (polar residues). Residue serine 492 is the site of GPI-anchor amidated serine attachment. The propeptide at 493-529 (ISDITSSAPPSSHILPKDLSWCLFLLSIFSQHWKYLL) is removed in mature form.

It belongs to the glycosyl hydrolase 56 family. Post-translationally, endoproteolysis (toward the C-terminus producing two disulfide-linked fragments) could activate PH-20. Testis.

It localises to the cell membrane. The catalysed reaction is Random hydrolysis of (1-&gt;4)-linkages between N-acetyl-beta-D-glucosamine and D-glucuronate residues in hyaluronate.. Functionally, involved in sperm-egg adhesion. Upon fertilization sperm must first penetrate a layer of cumulus cells that surrounds the egg before reaching the zona pellucida. The cumulus cells are embedded in a matrix containing hyaluronic acid which is formed prior to ovulation. This protein aids in penetrating the layer of cumulus cells by digesting hyaluronic acid. This chain is Hyaluronidase PH-20 (SPAM1), found in Cavia porcellus (Guinea pig).